The chain runs to 197 residues: Large ribosomal subunit protein bL25 (197 aa).

It belongs to the bacterial ribosomal protein bL25 family. CTC subfamily. Part of the 50S ribosomal subunit; part of the 5S rRNA/L5/L18/L25 subcomplex. Contacts the 5S rRNA. Binds to the 5S rRNA independently of L5 and L18.

Functionally, this is one of the proteins that binds to the 5S RNA in the ribosome where it forms part of the central protuberance. This Lawsonia intracellularis (strain PHE/MN1-00) protein is Large ribosomal subunit protein bL25.